A 370-amino-acid polypeptide reads, in one-letter code: Phospho-N-acetylmuramoyl-pentapeptide-transferase (370 aa).

10 helical membrane passes run 29–49 (AGLT…SFLL), 70–90 (GTPT…TLLW), 93–113 (LSNW…GLGF), 133–153 (KFIV…YYTG), 177–197 (GPVW…LIGS), 209–229 (GLAS…AYVS), 251–271 (VFLA…CHPA), 273–293 (VFMG…VAIM), 298–318 (ILLV…ILQV), and 349–369 (VIRF…TLKI).

This sequence belongs to the glycosyltransferase 4 family. MraY subfamily. It depends on Mg(2+) as a cofactor.

The protein localises to the cell inner membrane. The enzyme catalyses UDP-N-acetyl-alpha-D-muramoyl-L-alanyl-gamma-D-glutamyl-meso-2,6-diaminopimeloyl-D-alanyl-D-alanine + di-trans,octa-cis-undecaprenyl phosphate = di-trans,octa-cis-undecaprenyl diphospho-N-acetyl-alpha-D-muramoyl-L-alanyl-D-glutamyl-meso-2,6-diaminopimeloyl-D-alanyl-D-alanine + UMP. Its pathway is cell wall biogenesis; peptidoglycan biosynthesis. Catalyzes the initial step of the lipid cycle reactions in the biosynthesis of the cell wall peptidoglycan: transfers peptidoglycan precursor phospho-MurNAc-pentapeptide from UDP-MurNAc-pentapeptide onto the lipid carrier undecaprenyl phosphate, yielding undecaprenyl-pyrophosphoryl-MurNAc-pentapeptide, known as lipid I. In Leptospira biflexa serovar Patoc (strain Patoc 1 / Ames), this protein is Phospho-N-acetylmuramoyl-pentapeptide-transferase.